Reading from the N-terminus, the 946-residue chain is RIPOR family member 3 (946 aa).

A phosphoserine mark is found at serine 9, serine 24, and serine 340. Position 345 is a phosphothreonine (threonine 345). A phosphoserine mark is found at serine 351 and serine 384. Residues glycine 390 to alanine 512 form a disordered region. Positions serine 437–proline 446 are enriched in basic and acidic residues. Residues serine 478 to asparagine 495 are compositionally biased toward polar residues. The span at glycine 496–glycine 508 shows a compositional bias: basic and acidic residues.

It belongs to the RIPOR family.

The chain is RIPOR family member 3 from Homo sapiens (Human).